The chain runs to 129 residues: Glycine cleavage system H protein (129 aa).

In terms of domain architecture, Lipoyl-binding spans 24-106; it reads LLKIGVSEFA…IGEGWLVILK (83 aa). The residue at position 65 (Lys65) is an N6-lipoyllysine.

It belongs to the GcvH family. As to quaternary structure, the glycine cleavage system is composed of four proteins: P, T, L and H. Requires (R)-lipoate as cofactor.

In terms of biological role, the glycine cleavage system catalyzes the degradation of glycine. The H protein shuttles the methylamine group of glycine from the P protein to the T protein. The sequence is that of Glycine cleavage system H protein from Prochlorococcus marinus (strain MIT 9312).